We begin with the raw amino-acid sequence, 234 residues long: Uridylate kinase (234 aa).

Residue 9–12 (KLSG) participates in ATP binding. G51 is a UMP binding site. 2 residues coordinate ATP: G52 and R56. Residues D71 and 132–139 (CGNPFFTT) each bind UMP. ATP-binding residues include T159, Y165, and D168.

Belongs to the UMP kinase family. In terms of assembly, homohexamer.

The protein localises to the cytoplasm. The catalysed reaction is UMP + ATP = UDP + ADP. It functions in the pathway pyrimidine metabolism; CTP biosynthesis via de novo pathway; UDP from UMP (UMPK route): step 1/1. Inhibited by UTP. Functionally, catalyzes the reversible phosphorylation of UMP to UDP. In Prochlorococcus marinus (strain MIT 9301), this protein is Uridylate kinase.